We begin with the raw amino-acid sequence, 150 residues long: Transcriptional regulator MraZ (150 aa).

2 SpoVT-AbrB domains span residues 5 to 52 (VTHL…PLPD) and 81 to 124 (AHDL…DAEA).

It belongs to the MraZ family. Forms oligomers.

It localises to the cytoplasm. It is found in the nucleoid. The protein is Transcriptional regulator MraZ of Alkalilimnicola ehrlichii (strain ATCC BAA-1101 / DSM 17681 / MLHE-1).